We begin with the raw amino-acid sequence, 474 residues long: Aspartate ammonia-lyase (474 aa).

L-aspartate contacts are provided by threonine 105, serine 144, threonine 145, asparagine 146, and threonine 191. The tract at residues 322 to 331 is SS loop; that stretch reads GSSIMPGKVN. Residue serine 323 is the Proton acceptor of the active site. L-aspartate is bound by residues serine 324 and lysine 329.

Belongs to the class-II fumarase/aspartase family. Aspartase subfamily. As to quaternary structure, homotetramer.

It carries out the reaction L-aspartate = fumarate + NH4(+). The catalysed reaction is L-phenylalanine = (E)-cinnamate + NH4(+). Does not require any divalent metal ion for activation of catalysis, but the activity is slightly increased in the presence of Mg(2+), Mn(2+), Ca(2+) or Co(2+). Its function is as follows. Catalyzes the reversible conversion of L-aspartate to fumarate and ammonia. Can also utilize L-phenylalanine to form cinnamic acid. Exhibits the highest specific activity towards L-phenylalanine, but catalytic efficiency is 3-fold higher with L-aspartate. In Pseudomonas aeruginosa (strain ATCC 15692 / DSM 22644 / CIP 104116 / JCM 14847 / LMG 12228 / 1C / PRS 101 / PAO1), this protein is Aspartate ammonia-lyase.